Reading from the N-terminus, the 614-residue chain is Pentatricopeptide repeat-containing protein At1g63080, mitochondrial (614 aa).

Residues 1 to 7 constitute a mitochondrion transit peptide; sequence MSLAKRF. PPR repeat units follow at residues 64 to 98, 99 to 133, 134 to 168, 169 to 203, 204 to 238, 239 to 273, 274 to 308, 309 to 343, 344 to 378, 379 to 413, 414 to 448, 449 to 483, 484 to 518, 519 to 553, and 554 to 588; these read SIVE…GVSH, NLYT…GYGP, SIVT…GYQP, DTVT…GCQP, DLVT…KIEA, DVVI…GIRP, DVFT…KINP, NVVT…SIDP, NIVT…DCLP, DVVT…GLVG, NTVT…GVHP, NIMT…KMEP, DIYT…GVKP, DVIA…GPLP, and DSGT…RFAG.

Belongs to the PPR family. P subfamily.

The protein resides in the mitochondrion. The sequence is that of Pentatricopeptide repeat-containing protein At1g63080, mitochondrial from Arabidopsis thaliana (Mouse-ear cress).